Consider the following 429-residue polypeptide: Cell wall protein ECM33 (429 aa).

The first 19 residues, 1 to 19 (MQFKNALTATAILSASALA), serve as a signal peptide directing secretion. N-linked (GlcNAc...) asparagine glycans are attached at residues Asn-21, Asn-56, Asn-82, Asn-196, Asn-209, Asn-227, Asn-234, Asn-241, Asn-267, Asn-279, Asn-304, and Asn-328. Position 339 is a phosphoserine (Ser-339). The span at 361–401 (LSSTSTESSKSSATSSASSSGDASNAQASVSASASSSSSSS) shows a compositional bias: low complexity. The tract at residues 361 to 410 (LSSTSTESSKSSATSSASSSGDASNAQASVSASASSSSSSSKKSKGAAPE) is disordered. Gly-406 carries GPI-anchor amidated glycine lipidation. A propeptide spans 407 to 429 (AAPELVPATSFMGVVAAVAVALL) (removed in mature form).

Belongs to the SPS2 family. In terms of processing, the GPI-anchor is attached to the protein in the endoplasmic reticulum and serves to target the protein to the cell surface. There, the glucosamine-inositol phospholipid moiety is cleaved off and the GPI-modified mannoprotein is covalently attached via its lipidless GPI glycan remnant to the 1,6-beta-glucan of the outer cell wall layer.

Its subcellular location is the cell membrane. It is found in the secreted. The protein resides in the cell wall. Functionally, required for proper cell wall integrity and for the correct assembly of the mannoprotein outer layer of the cell wall. Important for apical bud growth. This Saccharomyces cerevisiae (strain YJM789) (Baker's yeast) protein is Cell wall protein ECM33 (ECM33).